We begin with the raw amino-acid sequence, 270 residues long: MPELPEVETTRRGLAPHLQGRRVHGVILRRADLRWPIPPEVAGQLPGQRIDAVRRRAKYLLLDTAAGSAVLHLGMSGSLRVLPGDTPLRAHDHVDISLDNGRLLRFNDPRRFGSLLWQPAGEVHPLLQGLGPEPLDDAFDGNYLFARSRGRSAPVKTFLMDQAVVVGVGNIYAAESLFKAGISPLREAGKISRERYQRLADAVKEILGYAITRGGTTLRDFISPDGAPGYFEQELLVYGRDGLPCPNCGRALKHATIGQRASVWCSHCQR.

Residue proline 2 is the Schiff-base intermediate with DNA of the active site. Glutamate 3 (proton donor) is an active-site residue. Catalysis depends on lysine 58, which acts as the Proton donor; for beta-elimination activity. Residues histidine 91, arginine 110, and arginine 151 each coordinate DNA. The FPG-type zinc-finger motif lies at 236 to 270; sequence LVYGRDGLPCPNCGRALKHATIGQRASVWCSHCQR. The Proton donor; for delta-elimination activity role is filled by arginine 260.

Belongs to the FPG family. As to quaternary structure, monomer. Zn(2+) serves as cofactor.

The enzyme catalyses Hydrolysis of DNA containing ring-opened 7-methylguanine residues, releasing 2,6-diamino-4-hydroxy-5-(N-methyl)formamidopyrimidine.. The catalysed reaction is 2'-deoxyribonucleotide-(2'-deoxyribose 5'-phosphate)-2'-deoxyribonucleotide-DNA = a 3'-end 2'-deoxyribonucleotide-(2,3-dehydro-2,3-deoxyribose 5'-phosphate)-DNA + a 5'-end 5'-phospho-2'-deoxyribonucleoside-DNA + H(+). Involved in base excision repair of DNA damaged by oxidation or by mutagenic agents. Acts as a DNA glycosylase that recognizes and removes damaged bases. Has a preference for oxidized purines, such as 7,8-dihydro-8-oxoguanine (8-oxoG). Has AP (apurinic/apyrimidinic) lyase activity and introduces nicks in the DNA strand. Cleaves the DNA backbone by beta-delta elimination to generate a single-strand break at the site of the removed base with both 3'- and 5'-phosphates. This chain is Formamidopyrimidine-DNA glycosylase, found in Stenotrophomonas maltophilia (strain R551-3).